The sequence spans 286 residues: Phosphatidylglycerol--prolipoprotein diacylglyceryl transferase (286 aa).

A run of 7 helical transmembrane segments spans residues I24–W44, F72–Y92, I104–A124, F140–I160, L190–S210, R218–F238, and W253–A273. R155 contacts a 1,2-diacyl-sn-glycero-3-phospho-(1'-sn-glycerol).

Belongs to the Lgt family.

It localises to the cell inner membrane. The enzyme catalyses L-cysteinyl-[prolipoprotein] + a 1,2-diacyl-sn-glycero-3-phospho-(1'-sn-glycerol) = an S-1,2-diacyl-sn-glyceryl-L-cysteinyl-[prolipoprotein] + sn-glycerol 1-phosphate + H(+). The protein operates within protein modification; lipoprotein biosynthesis (diacylglyceryl transfer). Its function is as follows. Catalyzes the transfer of the diacylglyceryl group from phosphatidylglycerol to the sulfhydryl group of the N-terminal cysteine of a prolipoprotein, the first step in the formation of mature lipoproteins. This chain is Phosphatidylglycerol--prolipoprotein diacylglyceryl transferase, found in Mesorhizobium japonicum (strain LMG 29417 / CECT 9101 / MAFF 303099) (Mesorhizobium loti (strain MAFF 303099)).